We begin with the raw amino-acid sequence, 237 residues long: UPF0502 protein HEAR1280 (237 aa).

The span at 1–13 shows a compositional bias: polar residues; that stretch reads MNTEVMHSTSTES. The tract at residues 1–21 is disordered; the sequence is MNTEVMHSTSTESDAQEKPQA.

It belongs to the UPF0502 family.

This chain is UPF0502 protein HEAR1280, found in Herminiimonas arsenicoxydans.